The chain runs to 214 residues: Adenylate kinase (214 aa).

10–15 contributes to the ATP binding site; that stretch reads GAGKGT. Residues 30–59 form an NMP region; it reads STGDMLRAAVKAGTPLGLEAKKVMDAGQLV. Residues T31, R36, 57–59, 85–88, and Q92 each bind AMP; these read QLV and GFPR. Residues 122–159 are LID; sequence GRRVHPGSGRVYHVVFNPPKVEGKDDVTGEDLAIRPDD. Residues R123 and 132 to 133 contribute to the ATP site; that span reads VY. Residues R156 and R167 each contribute to the AMP site. An ATP-binding site is contributed by Q200.

The protein belongs to the adenylate kinase family. Monomer.

The protein resides in the cytoplasm. The enzyme catalyses AMP + ATP = 2 ADP. Its pathway is purine metabolism; AMP biosynthesis via salvage pathway; AMP from ADP: step 1/1. In terms of biological role, catalyzes the reversible transfer of the terminal phosphate group between ATP and AMP. Plays an important role in cellular energy homeostasis and in adenine nucleotide metabolism. This chain is Adenylate kinase, found in Shewanella baltica (strain OS155 / ATCC BAA-1091).